Consider the following 268-residue polypeptide: Cytochrome b-c1 complex subunit Rieske-5, mitochondrial (268 aa).

The transit peptide at 1-56 (MLRIAGRKLSSSAAARSSSAFFTRNPFTFTDDSSSPTRSPSPTSLASQFLDQFRGF) directs the protein to the mitochondrion. Over 57–105 (SSNSVSPAHQTGLVSDLPATVAAIKNPSSKIVYDDSNHERYPPGDPSKR) the chain is Mitochondrial matrix. The helical transmembrane segment at 106–128 (AFAYFVLTGGRFVYASLVRLLIL) threads the bilayer. Residues 129–268 (KFVLSMSASK…FMEENKLLIG (140 aa)) lie on the Mitochondrial intermembrane side of the membrane. Residues 178-266 (INLANSVDLG…YSFMEENKLL (89 aa)) enclose the Rieske domain. 4 residues coordinate [2Fe-2S] cluster: Cys211, His213, Cys230, and His233. Cysteines 216 and 232 form a disulfide.

It belongs to the Rieske iron-sulfur protein family. In terms of assembly, component of the ubiquinol-cytochrome c oxidoreductase (cytochrome b-c1 complex, complex III, CIII), a multisubunit enzyme composed of 3 respiratory subunits cytochrome b, cytochrome c1 and Rieske protein, 2 core protein subunits, and several low-molecular weight protein subunits. The complex exists as an obligatory dimer and forms supercomplexes (SCs) in the inner mitochondrial membrane with cytochrome c oxidase (complex IV, CIV). [2Fe-2S] cluster is required as a cofactor. In terms of tissue distribution, high levels are seen in the flowers while a low level expression is seen in the roots, leaves and stems.

Its subcellular location is the mitochondrion inner membrane. It carries out the reaction a quinol + 2 Fe(III)-[cytochrome c](out) = a quinone + 2 Fe(II)-[cytochrome c](out) + 2 H(+)(out). Its function is as follows. Component of the ubiquinol-cytochrome c oxidoreductase, a multisubunit transmembrane complex that is part of the mitochondrial electron transport chain which drives oxidative phosphorylation. The respiratory chain contains 3 multisubunit complexes succinate dehydrogenase (complex II, CII), ubiquinol-cytochrome c oxidoreductase (cytochrome b-c1 complex, complex III, CIII) and cytochrome c oxidase (complex IV, CIV), that cooperate to transfer electrons derived from NADH and succinate to molecular oxygen, creating an electrochemical gradient over the inner membrane that drives transmembrane transport and the ATP synthase. The cytochrome b-c1 complex catalyzes electron transfer from ubiquinol to cytochrome c, linking this redox reaction to translocation of protons across the mitochondrial inner membrane, with protons being carried across the membrane as hydrogens on the quinol. In the process called Q cycle, 2 protons are consumed from the matrix, 4 protons are released into the intermembrane space and 2 electrons are passed to cytochrome c. The Rieske protein is a catalytic core subunit containing a [2Fe-2S] iron-sulfur cluster. It cycles between 2 conformational states during catalysis to transfer electrons from the quinol bound in the Q(0) site in cytochrome b to cytochrome c1. The chain is Cytochrome b-c1 complex subunit Rieske-5, mitochondrial from Nicotiana tabacum (Common tobacco).